Consider the following 118-residue polypeptide: Late cornified envelope protein 1E (118 aa).

The span at 1–10 shows a compositional bias: low complexity; sequence MSCQQSQQQC. Disordered regions lie at residues 1–23 and 84–118; these read MSCQ…CPPK and RSHR…GGCC. Positions 11 to 23 are enriched in pro residues; the sequence is QPPPKCTPKCPPK. Over residues 92 to 103 the composition is skewed to low complexity; that stretch reads SSDCCSQPSGGS. The segment covering 104–118 has biased composition (gly residues); the sequence is SCCGGGSGQHSGGCC.

The protein belongs to the LCE family. As to quaternary structure, interacts with CYSRT1. Skin-specific. Expression was readily detected in adult trunk skin, adult arm skin, fetal skin, penal skin, vulva, esophagus and tongue. Not expressed in the cervix, rectum, lung, colon, or placenta.

Its function is as follows. Precursors of the cornified envelope of the stratum corneum. This is Late cornified envelope protein 1E (LCE1E) from Homo sapiens (Human).